A 196-amino-acid chain; its full sequence is Peptidyl-tRNA hydrolase (196 aa).

Y18 provides a ligand contact to tRNA. The active-site Proton acceptor is H23. F69, N71, and N117 together coordinate tRNA.

Belongs to the PTH family. As to quaternary structure, monomer.

The protein resides in the cytoplasm. The enzyme catalyses an N-acyl-L-alpha-aminoacyl-tRNA + H2O = an N-acyl-L-amino acid + a tRNA + H(+). Functionally, hydrolyzes ribosome-free peptidyl-tRNAs (with 1 or more amino acids incorporated), which drop off the ribosome during protein synthesis, or as a result of ribosome stalling. Catalyzes the release of premature peptidyl moieties from peptidyl-tRNA molecules trapped in stalled 50S ribosomal subunits, and thus maintains levels of free tRNAs and 50S ribosomes. The sequence is that of Peptidyl-tRNA hydrolase from Vibrio campbellii (strain ATCC BAA-1116).